Consider the following 226-residue polypeptide: Leucyl/phenylalanyl-tRNA--protein transferase (226 aa).

Belongs to the L/F-transferase family.

The protein resides in the cytoplasm. The enzyme catalyses N-terminal L-lysyl-[protein] + L-leucyl-tRNA(Leu) = N-terminal L-leucyl-L-lysyl-[protein] + tRNA(Leu) + H(+). It catalyses the reaction N-terminal L-arginyl-[protein] + L-leucyl-tRNA(Leu) = N-terminal L-leucyl-L-arginyl-[protein] + tRNA(Leu) + H(+). The catalysed reaction is L-phenylalanyl-tRNA(Phe) + an N-terminal L-alpha-aminoacyl-[protein] = an N-terminal L-phenylalanyl-L-alpha-aminoacyl-[protein] + tRNA(Phe). In terms of biological role, functions in the N-end rule pathway of protein degradation where it conjugates Leu, Phe and, less efficiently, Met from aminoacyl-tRNAs to the N-termini of proteins containing an N-terminal arginine or lysine. The polypeptide is Leucyl/phenylalanyl-tRNA--protein transferase (Pseudomonas fluorescens (strain SBW25)).